A 494-amino-acid polypeptide reads, in one-letter code: MDPYKHRPSSAFNSPFWTTNSGAPVWNNNSSLTVGSRGPILLEDYHLVEKLAQFDRERIPERVVHARGASAKGFFEVTHDISHLTCADFLRAPGVQTPVIVRFSTVIHERGSPETLRDPRGFAVKFYTREGNYDLVGNNFPVFFVHDGMNFPDMVHALKPNPQTHIQENWRILDFFYNFPESLHMFSFLFDDVGVPQDYRHMDGFGVNTYTLINKAGKSVYVKFHWKPTCGVKCLLEEEAIQVGGSNHSHATKDLYDSIAAGNYPEWKLYIQTIDPAHEDRFEFDPLDVTKTWPEDIIPLQPVGRMVLNKNIDNFFAENEQLAFCPAIMLPGIYYSDDKMLQTRVFSYADSQRHRLGPNYLQLPVNAPKWSHHNNHHEGFMNAIHRDEEVNYFPSRHDTVRHAERVPIPTTHLSARREKCNIPKQNHFKQAGERYRTWAPDRQERFLRRWVEALSDTDPRITHEIRSIWVSYWSQADRSLGQKLASHLNMRPSI.

Catalysis depends on residues His-65 and Asn-138. Position 348 (Tyr-348) interacts with heme.

This sequence belongs to the catalase family. In terms of assembly, homotetramer. Heme is required as a cofactor.

Its subcellular location is the cytoplasm. The protein resides in the cytosol. It localises to the peroxisome matrix. It carries out the reaction 2 H2O2 = O2 + 2 H2O. In terms of biological role, catalyzes the degradation of hydrogen peroxide (H(2)O(2)) generated by peroxisomal oxidases to water and oxygen, thereby protecting cells from the toxic effects of hydrogen peroxide. The sequence is that of Catalase from Pisum sativum (Garden pea).